The primary structure comprises 269 residues: MNSPYQPTILFFDSGMGGFSVYKETKQLLPDCHYLYCFDNAFFPYSEKSEEEIIQRTLKICQKIDRTFPLDLIVIACNTASTVVLPALRAHFAIPVVGTVPAIKPAAECSETKHIGLLATKGTVKRAYVADLIAQYARDCTVEKLGSTKLVEIAEQKLHGKAVDLHALKQELAPWQSIQNLDTVVLGCTHFPLIKEEIKWCLPQVRFFVDSGKAIALRVKTLLSKIDIQSKTNEKNLIFCTQFFEDETQFQKVIHFWGFEQLINLNMKA.

Substrate-binding positions include 13 to 14 (DS) and 45 to 46 (YS). C77 (proton donor/acceptor) is an active-site residue. Position 78–79 (78–79 (NT)) interacts with substrate. C188 acts as the Proton donor/acceptor in catalysis. Residue 189–190 (TH) coordinates substrate.

It belongs to the aspartate/glutamate racemases family.

The enzyme catalyses L-glutamate = D-glutamate. It participates in cell wall biogenesis; peptidoglycan biosynthesis. Provides the (R)-glutamate required for cell wall biosynthesis. This Pasteurella multocida (strain Pm70) protein is Glutamate racemase.